The primary structure comprises 406 residues: 4-hydroxy-3-methylbut-2-en-1-yl diphosphate synthase (ferredoxin) (406 aa).

Residues Cys314, Cys317, Cys348, and Glu355 each contribute to the [4Fe-4S] cluster site.

It belongs to the IspG family. It depends on [4Fe-4S] cluster as a cofactor.

It carries out the reaction (2E)-4-hydroxy-3-methylbut-2-enyl diphosphate + 2 oxidized [2Fe-2S]-[ferredoxin] + H2O = 2-C-methyl-D-erythritol 2,4-cyclic diphosphate + 2 reduced [2Fe-2S]-[ferredoxin] + H(+). The protein operates within isoprenoid biosynthesis; isopentenyl diphosphate biosynthesis via DXP pathway; isopentenyl diphosphate from 1-deoxy-D-xylulose 5-phosphate: step 5/6. Converts 2C-methyl-D-erythritol 2,4-cyclodiphosphate (ME-2,4cPP) into 1-hydroxy-2-methyl-2-(E)-butenyl 4-diphosphate. The chain is 4-hydroxy-3-methylbut-2-en-1-yl diphosphate synthase (ferredoxin) from Prochlorococcus marinus (strain MIT 9313).